The sequence spans 136 residues: Histone H3.3C (136 aa).

Positions 1 to 10 (MARTKQTACK) are enriched in polar residues. The tract at residues 1–39 (MARTKQTACKSTGRKAPRKQLATKAAHKSAPAMGGVKKP) is disordered. At Arg3 the chain carries Asymmetric dimethylarginine; by PRMT6. Phosphothreonine; by HASPIN is present on Thr4. Allysine; alternate is present on Lys5. Lys5 bears the N6,N6,N6-trimethyllysine; alternate mark. At Lys5 the chain carries N6,N6-dimethyllysine; alternate. Position 5 is an N6-(2-hydroxyisobutyryl)lysine; alternate (Lys5). N6-acetyllysine; alternate is present on Lys5. Lys5 carries the post-translational modification N6-methyllysine; alternate. Gln6 is modified (5-glutamyl dopamine; alternate). Residue Gln6 is modified to 5-glutamyl serotonin; alternate. A Phosphothreonine; by PKC modification is found at Thr7. The residue at position 10 (Lys10) is an N6-(2-hydroxyisobutyryl)lysine; alternate. Lys10 carries the post-translational modification N6-lactoyllysine; alternate. Residue Lys10 is modified to N6-methylated lysine. ADP-ribosylserine; alternate is present on Ser11. Ser11 is subject to Phosphoserine; alternate; by AURKB, AURKC, RPS6KA3, RPS6KA4 and RPS6KA5. A Phosphothreonine; by PKC modification is found at Thr12. Lys15 is subject to N6-(2-hydroxyisobutyryl)lysine; alternate. Lys15 bears the N6-lactoyllysine; alternate mark. At Lys15 the chain carries N6-acetyllysine. Lys15 is modified (N6-glutaryllysine; alternate). Arg18 carries the asymmetric dimethylarginine modification. 3 positions are modified to N6-(2-hydroxyisobutyryl)lysine; alternate: Lys19, Lys24, and Lys28. Position 19 is an N6-acetyllysine; alternate (Lys19). 3 positions are modified to N6-lactoyllysine; alternate: Lys19, Lys24, and Lys28. N6-glutaryllysine; alternate occurs at positions 19, 24, and 28. N6-butyryllysine; alternate occurs at positions 19 and 24. N6-methylated lysine; alternate is present on Lys19. The residue at position 24 (Lys24) is an N6-acetyllysine. Lys28 is subject to N6-acetyllysine; alternate. The residue at position 28 (Lys28) is an N6-methylated lysine; alternate. Ser29 is modified (ADP-ribosylserine; alternate). A Phosphoserine; alternate; by AURKB, AURKC and RPS6KA5 modification is found at Ser29. An N6-(2-hydroxyisobutyryl)lysine; alternate modification is found at Lys37. N6-acetyllysine; alternate is present on Lys37. An N6-methylated lysine; alternate modification is found at Lys37. Tyr42 is modified (phosphotyrosine). Lys57 carries the N6-(2-hydroxyisobutyryl)lysine; alternate modification. Residue Lys57 is modified to N6-lactoyllysine; alternate. Lys57 carries the N6-glutaryllysine; alternate modification. Residue Lys57 is modified to N6-succinyllysine; alternate. Ser58 carries the post-translational modification Phosphoserine. N6-(2-hydroxyisobutyryl)lysine; alternate is present on residues Lys65 and Lys80. An N6-methylated lysine mark is found at Lys65 and Lys80. At Lys80 the chain carries N6-lactoyllysine; alternate. Lys80 carries the post-translational modification N6-glutaryllysine; alternate. Position 80 is an N6-succinyllysine; alternate (Lys80). Phosphothreonine is present on Thr81. An N6-acetyllysine; alternate mark is found at Lys116 and Lys123. 2 positions are modified to N6-glutaryllysine; alternate: Lys116 and Lys123. The residue at position 123 (Lys123) is an N6-(2-hydroxyisobutyryl)lysine; alternate. Lys123 bears the N6-methylated lysine; alternate mark. N6-succinyllysine; alternate is present on Lys123.

The protein belongs to the histone H3 family. As to quaternary structure, the nucleosome is a histone octamer containing two molecules each of H2A, H2B, H3 and H4 assembled in one H3-H4 heterotetramer and two H2A-H2B heterodimers. The octamer wraps approximately 147 bp of DNA. Post-translationally, acetylation is generally linked to gene activation. Acetylation on Lys-19 (H3K18ac) and Lys-24 (H3K24ac) favors methylation at Arg-18 (H3R17me). Acetylation at Lys-123 (H3K122ac) by EP300/p300 plays a central role in chromatin structure: localizes at the surface of the histone octamer and stimulates transcription, possibly by promoting nucleosome instability. In terms of processing, asymmetric dimethylation at Arg-18 (H3R17me2a) is linked to gene activation. Asymmetric dimethylation at Arg-3 (H3R2me2a) by PRMT6 is linked to gene repression and is mutually exclusive with H3 Lys-5 methylation (H3K4me2 and H3K4me3). H3R2me2a is present at the 3' of genes regardless of their transcription state and is enriched on inactive promoters, while it is absent on active promoters. Methylation at Lys-5 (H3K4me) and Lys-80 (H3K79me) are linked to gene activation. Methylation at Lys-5 (H3K4me) facilitates subsequent acetylation of H3 and H4. Methylation at Lys-80 (H3K79me) is associated with DNA double-strand break (DSB) responses and is a specific target for TP53BP1. Methylation at Lys-10 (H3K9me) and Lys-28 (H3K27me) are linked to gene repression. Methylation at Lys-10 (H3K9me) is a specific target for HP1 proteins (CBX1, CBX3 and CBX5) and prevents subsequent phosphorylation at Ser-11 (H3S10ph) and acetylation of H3 and H4. Methylation at Lys-5 (H3K4me) and Lys-80 (H3K79me) require preliminary monoubiquitination of H2B at 'Lys-120'. Post-translationally, phosphorylated at Thr-4 (H3T3ph) by HASPIN during prophase and dephosphorylated during anaphase. Phosphorylation at Ser-11 (H3S10ph) by AURKB is crucial for chromosome condensation and cell-cycle progression during mitosis and meiosis. In addition phosphorylation at Ser-11 (H3S10ph) by RPS6KA4 and RPS6KA5 is important during interphase because it enables the transcription of genes following external stimulation, like mitogens, stress, growth factors or UV irradiation and result in the activation of genes, such as c-fos and c-jun. Phosphorylation at Ser-11 (H3S10ph), which is linked to gene activation, prevents methylation at Lys-10 (H3K9me) but facilitates acetylation of H3 and H4. Phosphorylation at Ser-11 (H3S10ph) by AURKB mediates the dissociation of HP1 proteins (CBX1, CBX3 and CBX5) from heterochromatin. Phosphorylation at Ser-11 (H3S10ph) is also an essential regulatory mechanism for neoplastic cell transformation. Phosphorylated at Ser-29 (H3S28ph) by MAP3K20 isoform 1, RPS6KA5 or AURKB during mitosis or upon ultraviolet B irradiation. Phosphorylation at Thr-7 (H3T6ph) by PRKCB is a specific tag for epigenetic transcriptional activation that prevents demethylation of Lys-5 (H3K4me) by LSD1/KDM1A. At centromeres, specifically phosphorylated at Thr-12 (H3T11ph) from prophase to early anaphase, by DAPK3 and PKN1. Phosphorylation at Thr-12 (H3T11ph) by PKN1 or isoform M2 of PKM (PKM2) is a specific tag for epigenetic transcriptional activation that promotes demethylation of Lys-10 (H3K9me) by KDM4C/JMJD2C. Phosphorylation at Tyr-42 (H3Y41ph) by JAK2 promotes exclusion of CBX5 (HP1 alpha) from chromatin. In terms of processing, lysine deamination at Lys-5 (H3K4all) to form allysine only takes place on H3K4me3 and results in gene repression. Butyrylation of histones marks active promoters and competes with histone acetylation. It is present during late spermatogenesis. Post-translationally, succinylation at Lys-80 (H3K79succ) by KAT2A takes place with a maximum frequency around the transcription start sites of genes. It gives a specific tag for epigenetic transcription activation. Desuccinylation at Lys-123 (H3K122succ) by SIRT7 in response to DNA damage promotes chromatin condensation and double-strand breaks (DSBs) repair. In terms of processing, serine ADP-ribosylation constitutes the primary form of ADP-ribosylation of proteins in response to DNA damage. Serine ADP-ribosylation at Ser-11 (H3S10ADPr) is mutually exclusive with phosphorylation at Ser-11 (H3S10ph) and impairs acetylation at Lys-10 (H3K9ac).

The protein resides in the nucleus. It localises to the chromosome. Functionally, core component of nucleosome. Nucleosomes wrap and compact DNA into chromatin, limiting DNA accessibility to the cellular machineries which require DNA as a template. Histones thereby play a central role in transcription regulation, DNA repair, DNA replication and chromosomal stability. DNA accessibility is regulated via a complex set of post-translational modifications of histones, also called histone code, and nucleosome remodeling. In Cairina moschata (Muscovy duck), this protein is Histone H3.3C.